Reading from the N-terminus, the 475-residue chain is ATP synthase subunit beta, chloroplastic (475 aa).

An ATP-binding site is contributed by 155-162 (GGAGVGKT).

The protein belongs to the ATPase alpha/beta chains family. F-type ATPases have 2 components, CF(1) - the catalytic core - and CF(0) - the membrane proton channel. CF(1) has five subunits: alpha(3), beta(3), gamma(1), delta(1), epsilon(1). CF(0) has four main subunits: a(1), b(1), b'(1) and c(9-12).

It is found in the plastid. The protein localises to the chloroplast thylakoid membrane. The catalysed reaction is ATP + H2O + 4 H(+)(in) = ADP + phosphate + 5 H(+)(out). In terms of biological role, produces ATP from ADP in the presence of a proton gradient across the membrane. The catalytic sites are hosted primarily by the beta subunits. This Guillardia theta (Cryptophyte) protein is ATP synthase subunit beta, chloroplastic.